The following is a 245-amino-acid chain: tRNA1(Val) (adenine(37)-N6)-methyltransferase (245 aa).

Belongs to the methyltransferase superfamily. tRNA (adenine-N(6)-)-methyltransferase family.

The protein resides in the cytoplasm. The catalysed reaction is adenosine(37) in tRNA1(Val) + S-adenosyl-L-methionine = N(6)-methyladenosine(37) in tRNA1(Val) + S-adenosyl-L-homocysteine + H(+). Functionally, specifically methylates the adenine in position 37 of tRNA(1)(Val) (anticodon cmo5UAC). The sequence is that of tRNA1(Val) (adenine(37)-N6)-methyltransferase from Shigella boydii serotype 18 (strain CDC 3083-94 / BS512).